The primary structure comprises 63 residues: Large ribosomal subunit protein uL29 (63 aa).

Belongs to the universal ribosomal protein uL29 family.

The protein is Large ribosomal subunit protein uL29 of Bdellovibrio bacteriovorus (strain ATCC 15356 / DSM 50701 / NCIMB 9529 / HD100).